The following is a 411-amino-acid chain: Translation initiation factor 2 subunit gamma (411 aa).

The region spanning 9-201 (QPTVNIGMVG…AIEKYIPTPE (193 aa)) is the tr-type G domain. The G1 stretch occupies residues 18-25 (GHVDHGKS). Residues D21, S25, G46, and S48 each contribute to the Mg(2+) site. Residue 21-26 (DHGKST) participates in GTP binding. The G2 stretch occupies residues 46 to 50 (GISIK). Residues 88–91 (DAPG) form a G3 region. GTP contacts are provided by residues 144-147 (NKID) and 179-181 (SAY). Positions 144–147 (NKID) are G4. A G5 region spans residues 179-181 (SAY).

This sequence belongs to the TRAFAC class translation factor GTPase superfamily. Classic translation factor GTPase family. EIF2G subfamily. Heterotrimer composed of an alpha, a beta and a gamma chain. The cofactor is Mg(2+).

It catalyses the reaction GTP + H2O = GDP + phosphate + H(+). EIF-2 functions in the early steps of protein synthesis by forming a ternary complex with GTP and initiator tRNA. This Thermoplasma volcanium (strain ATCC 51530 / DSM 4299 / JCM 9571 / NBRC 15438 / GSS1) protein is Translation initiation factor 2 subunit gamma.